A 573-amino-acid polypeptide reads, in one-letter code: Protein phosphatase EYA3 (573 aa).

Met-1 carries the N-acetylmethionine modification. Disordered regions lie at residues 1–46 and 236–296; these read MEEE…LASN and TYQS…DATS. The segment covering 20 to 46 has biased composition (polar residues); that stretch reads SGEQTISQVSNPDVSDQKPETSSLASN. Positions 254 to 271 are enriched in low complexity; that stretch reads LSSGDPSTSPSLSQTTPS. Phosphoserine occurs at positions 262 and 266. Asp-309 (nucleophile) is an active-site residue. Residues Asp-309 and Asp-311 each contribute to the Mg(2+) site. The Proton donor role is filled by Asp-311. Ser-438 and Ser-472 each carry phosphoserine. Asp-537 is a Mg(2+) binding site.

The protein belongs to the HAD-like hydrolase superfamily. EYA family. In terms of assembly, interacts with SIX1 and DACH1, and probably SIX2, SIX4, SIX5. Mg(2+) serves as cofactor. In terms of processing, ser-266 phosphorylation is required for localization at sites of DNA damage and directing interaction with H2AX.

It localises to the cytoplasm. It is found in the nucleus. It carries out the reaction O-phospho-L-tyrosyl-[protein] + H2O = L-tyrosyl-[protein] + phosphate. In terms of biological role, tyrosine phosphatase that specifically dephosphorylates 'Tyr-142' of histone H2AX (H2AXY142ph). 'Tyr-142' phosphorylation of histone H2AX plays a central role in DNA repair and acts as a mark that distinguishes between apoptotic and repair responses to genotoxic stress. Promotes efficient DNA repair by dephosphorylating H2AX, promoting the recruitment of DNA repair complexes containing MDC1. Its function as histone phosphatase probably explains its role in transcription regulation during organogenesis. Coactivates SIX1, and seems to coactivate SIX2, SIX4 and SIX5. The repression of precursor cell proliferation in myoblasts by SIX1 is switched to activation through recruitment of EYA3 to the SIX1-DACH1 complex and seems to be dependent on EYA3 phosphatase activity. May be involved in development of the eye. The polypeptide is Protein phosphatase EYA3 (EYA3) (Homo sapiens (Human)).